The primary structure comprises 143 residues: Hemoglobin subunit alpha (143 aa).

At serine 1 the chain carries N-acetylserine. A Globin domain is found at 1–143 (SLSATDKARV…LALALSEKYR (143 aa)). Histidine 60 serves as a coordination point for O2. Residue histidine 89 participates in heme b binding.

It belongs to the globin family. Heterotetramer of two alpha chains and two beta chains. As to expression, red blood cells.

Its function is as follows. Involved in oxygen transport from gills to the various peripheral tissues. This is Hemoglobin subunit alpha (hba) from Leiostomus xanthurus (Spot).